The chain runs to 1370 residues: Major capsid protein (1370 aa).

This sequence belongs to the herpesviridae major capsid protein family. As to quaternary structure, homomultimer. Makes the hexons and eleven out of twelve pentons. Interacts with triplex proteins 1/TRX1 and 2/TRX2; adjacent capsomers are linked together in groups of three by triplexes, heterotrimeric complexes composed of one molecule of TRX1 and two molecules of TRX2. Interacts with scaffold protein; this interaction allows efficient MCP transport to the host nucleus. Interacts with capsid vertex component 2/CVC2. Interacts with the small capsomere-interacting protein/SCP.

The protein localises to the virion. It localises to the host nucleus. Its function is as follows. Self-assembles to form an icosahedral capsid with a T=16 symmetry, about 200 nm in diameter, and consisting of 150 hexons and 12 pentons (total of 162 capsomers). Hexons form the edges and faces of the capsid and are each composed of six MCP molecules. In contrast, one penton is found at each of the 12 vertices. Eleven of the pentons are MCP pentamers, while the last vertex is occupied by the portal complex. The capsid is surrounded by a layer of proteinaceous material designated the tegument which, in turn, is enclosed in an envelope of host cell-derived lipids containing virus-encoded glycoproteins. This chain is Major capsid protein, found in Human cytomegalovirus (strain AD169) (HHV-5).